A 472-amino-acid polypeptide reads, in one-letter code: Membrane-bound lytic murein transglycosylase F (472 aa).

An N-terminal signal peptide occupies residues M1–A24. Positions D25 to A259 are non-LT domain. Residues D260–E472 are LT domain. E306 is an active-site residue.

The protein in the N-terminal section; belongs to the bacterial solute-binding protein 3 family. This sequence in the C-terminal section; belongs to the transglycosylase Slt family.

It is found in the cell outer membrane. The catalysed reaction is Exolytic cleavage of the (1-&gt;4)-beta-glycosidic linkage between N-acetylmuramic acid (MurNAc) and N-acetylglucosamine (GlcNAc) residues in peptidoglycan, from either the reducing or the non-reducing ends of the peptidoglycan chains, with concomitant formation of a 1,6-anhydrobond in the MurNAc residue.. Its function is as follows. Murein-degrading enzyme that degrades murein glycan strands and insoluble, high-molecular weight murein sacculi, with the concomitant formation of a 1,6-anhydromuramoyl product. Lytic transglycosylases (LTs) play an integral role in the metabolism of the peptidoglycan (PG) sacculus. Their lytic action creates space within the PG sacculus to allow for its expansion as well as for the insertion of various structures such as secretion systems and flagella. The sequence is that of Membrane-bound lytic murein transglycosylase F from Methylobacillus flagellatus (strain ATCC 51484 / DSM 6875 / VKM B-1610 / KT).